Reading from the N-terminus, the 463-residue chain is 4-hydroxybenzoate polyprenyltransferase, mitochondrial (463 aa).

2 disordered regions span residues 28–48 (NNNT…STFN) and 133–152 (LLDD…NNKP). Residues 137-150 (NNSNSNNNNNSNNN) are compositionally biased toward low complexity. 7 consecutive transmembrane segments (helical) span residues 181–201 (IGVW…APAG), 206–226 (LKTM…GCVI), 257–277 (LIFL…SLNY), 305–325 (FVLG…IAGS), 330–350 (IVAP…TIYA), 375–395 (IILS…GIAA), and 431–451 (FISN…SKLL).

It belongs to the UbiA prenyltransferase family. Mg(2+) is required as a cofactor.

The protein resides in the mitochondrion inner membrane. It catalyses the reaction an all-trans-polyprenyl diphosphate + 4-hydroxybenzoate = a 4-hydroxy-3-(all-trans-polyprenyl)benzoate + diphosphate. It functions in the pathway cofactor biosynthesis; ubiquinone biosynthesis. Its function is as follows. Catalyzes the prenylation of para-hydroxybenzoate (PHB) with an all-trans polyprenyl group. Mediates the second step in the final reaction sequence of coenzyme Q (CoQ) biosynthesis, which is the condensation of the polyisoprenoid side chain with PHB. In terms of biological role, catalyzes the prenylation of para-hydroxybenzoate (PHB) with an all-trans polyprenyl group. Mediates the second step in the final reaction sequence of coenzyme Q (CoQ) biosynthesis, which is the condensation of the polyisoprenoid side chain with PHB, generating the first membrane-bound Q intermediate. The protein is 4-hydroxybenzoate polyprenyltransferase, mitochondrial of Dictyostelium discoideum (Social amoeba).